Consider the following 529-residue polypeptide: Bifunctional purine biosynthesis protein PurH (529 aa).

Positions 1-148 (MQQRRPIRRA…KNHKDVAIVV (148 aa)) constitute an MGS-like domain.

Belongs to the PurH family.

The catalysed reaction is (6R)-10-formyltetrahydrofolate + 5-amino-1-(5-phospho-beta-D-ribosyl)imidazole-4-carboxamide = 5-formamido-1-(5-phospho-D-ribosyl)imidazole-4-carboxamide + (6S)-5,6,7,8-tetrahydrofolate. It carries out the reaction IMP + H2O = 5-formamido-1-(5-phospho-D-ribosyl)imidazole-4-carboxamide. The protein operates within purine metabolism; IMP biosynthesis via de novo pathway; 5-formamido-1-(5-phospho-D-ribosyl)imidazole-4-carboxamide from 5-amino-1-(5-phospho-D-ribosyl)imidazole-4-carboxamide (10-formyl THF route): step 1/1. It functions in the pathway purine metabolism; IMP biosynthesis via de novo pathway; IMP from 5-formamido-1-(5-phospho-D-ribosyl)imidazole-4-carboxamide: step 1/1. The sequence is that of Bifunctional purine biosynthesis protein PurH from Pectobacterium carotovorum subsp. carotovorum (strain PC1).